The primary structure comprises 459 residues: Disease resistance protein CHL1 (459 aa).

The region spanning Arg16 to Val170 is the TIR domain. The active site involves Glu89. Residues Val191–Gly401 enclose the NB-ARC domain. Positions Glu429–Gln440 are enriched in basic and acidic residues. A disordered region spans residues Glu429 to Gln459.

In terms of tissue distribution, mostly expressed in leaves, stems and roots, and, to a lower extent, in flowers and siliques.

It localises to the cytoplasm. It catalyses the reaction NAD(+) + H2O = ADP-D-ribose + nicotinamide + H(+). Confers resistance to low temperatures by limiting chloroplast damage and cell death, thus maintaining growth homeostasis. The protein is Disease resistance protein CHL1 of Arabidopsis thaliana (Mouse-ear cress).